The chain runs to 470 residues: MNNSITLTLKNYLGRMPTVNEYYMLKSQVRNIQKIMFFNKDIFISLIKKNKKKFFYEIKSSPSEMRLHILEYFMKQQKTSSIGKLYAIIELQTILVSTYTDVLGVLTTKAPYVFPSNVRYEPRSMKKIAHDILTTINVATVSEKVMGRHNVSELVTNVNLLMEEYLRRHNKSCICYGSYSLYLLNPSIEYGDIDIMQTNSRIFLINLAFLIKFITGHNVMLLKVPYLKNYMVLRDDEDKHIIDSFNVRQDTMHSIPKILIDNIYIVDPTFQLLSMIKMFSQVDRLEDLARNQEKATIKLATLLEYVRVKHGIIFNGKVTNMPMPSSFDHEKRIITVDTSRYNFSFKKCFVYLDENSLSSDILNLNADDAIDFENVSNSVFLINDEIMYTYFSNTILMSSKDEIHEISARGVSAHILMYQILTDGDYLIPLSDIVNSLMFKEKIPIFSIIPRDKKTGKHGIINIEKDIITH.

Catalysis depends on residues Asp-192 and Asp-194.

This sequence belongs to the poxviridae poly(A) polymerase catalytic subunit family. Heterodimer of a large (catalytic) subunit and a small (regulatory) subunit.

The enzyme catalyses RNA(n) + ATP = RNA(n)-3'-adenine ribonucleotide + diphosphate. In terms of biological role, polymerase that creates the 3'-poly(A) tail of mRNA's. The sequence is that of Poly(A) polymerase catalytic subunit (PAPL) from Erythrocebus patas (Red guenon).